Here is a 608-residue protein sequence, read N- to C-terminus: UvrABC system protein C (608 aa).

Residues 13–91 enclose the GIY-YIG domain; sequence HKPGVYIMHD…IKKNSPKYNI (79 aa). The region spanning 202-237 is the UVR domain; that stretch reads DELTKKLTDKMMAASKNLNFELAAKLRDSITNIQVI.

The protein belongs to the UvrC family. In terms of assembly, interacts with UvrB in an incision complex.

The protein resides in the cytoplasm. The UvrABC repair system catalyzes the recognition and processing of DNA lesions. UvrC both incises the 5' and 3' sides of the lesion. The N-terminal half is responsible for the 3' incision and the C-terminal half is responsible for the 5' incision. The sequence is that of UvrABC system protein C from Finegoldia magna (strain ATCC 29328 / DSM 20472 / WAL 2508) (Peptostreptococcus magnus).